We begin with the raw amino-acid sequence, 339 residues long: Dihydroorotate dehydrogenase (quinone) (339 aa).

FMN-binding positions include 62-66 (AGMDK) and Thr-86. Lys-66 serves as a coordination point for substrate. A substrate-binding site is contributed by 111-115 (NRMGF). Asn-139 and Asn-172 together coordinate FMN. Residue Asn-172 participates in substrate binding. Ser-175 serves as the catalytic Nucleophile. A substrate-binding site is contributed by Asn-177. Residues Lys-217 and Thr-245 each contribute to the FMN site. 246–247 (NT) serves as a coordination point for substrate. FMN is bound by residues Gly-268, Gly-297, and 318 to 319 (YS).

This sequence belongs to the dihydroorotate dehydrogenase family. Type 2 subfamily. Monomer. The cofactor is FMN.

The protein resides in the cell membrane. The enzyme catalyses (S)-dihydroorotate + a quinone = orotate + a quinol. Its pathway is pyrimidine metabolism; UMP biosynthesis via de novo pathway; orotate from (S)-dihydroorotate (quinone route): step 1/1. Catalyzes the conversion of dihydroorotate to orotate with quinone as electron acceptor. This chain is Dihydroorotate dehydrogenase (quinone), found in Shewanella baltica (strain OS223).